Reading from the N-terminus, the 148-residue chain is Transcriptional repressor NrdR (148 aa).

The segment at 3–34 (CPFCHNEDTQVLDTRVSDEGDTIRRRRRCAKC) is a zinc-finger region. Residues 49–139 (PAIVKKNGSR…VYRSFADIES (91 aa)) form the ATP-cone domain.

This sequence belongs to the NrdR family. The cofactor is Zn(2+).

Negatively regulates transcription of bacterial ribonucleotide reductase nrd genes and operons by binding to NrdR-boxes. This Polynucleobacter necessarius subsp. necessarius (strain STIR1) protein is Transcriptional repressor NrdR.